Consider the following 155-residue polypeptide: Small ribosomal subunit protein uS7c (155 aa).

This sequence belongs to the universal ribosomal protein uS7 family. In terms of assembly, part of the 30S ribosomal subunit.

It localises to the plastid. The protein resides in the chloroplast. One of the primary rRNA binding proteins, it binds directly to 16S rRNA where it nucleates assembly of the head domain of the 30S subunit. The chain is Small ribosomal subunit protein uS7c (rps7) from Butomus umbellatus (Flowering rush).